The primary structure comprises 245 residues: Eukaryotic translation initiation factor 6 (245 aa).

2 positions are modified to phosphoserine; by CK1: Ser-174 and Ser-175.

It belongs to the eIF-6 family. In terms of assembly, monomer. Associates with the 60S ribosomal subunit. Post-translationally, phosphorylation at Ser-174 and Ser-175 promotes nuclear export.

The protein localises to the cytoplasm. It localises to the nucleus. It is found in the nucleolus. Functionally, binds to the 60S ribosomal subunit and prevents its association with the 40S ribosomal subunit to form the 80S initiation complex in the cytoplasm. Is also involved in ribosome biogenesis. Associates with pre-60S subunits in the nucleus and is involved in its nuclear export. In Candida albicans (strain SC5314 / ATCC MYA-2876) (Yeast), this protein is Eukaryotic translation initiation factor 6.